The primary structure comprises 509 residues: Lysine--tRNA ligase (509 aa).

2 residues coordinate Mg(2+): E418 and E425.

This sequence belongs to the class-II aminoacyl-tRNA synthetase family. In terms of assembly, homodimer. Mg(2+) serves as cofactor.

The protein localises to the cytoplasm. The enzyme catalyses tRNA(Lys) + L-lysine + ATP = L-lysyl-tRNA(Lys) + AMP + diphosphate. The protein is Lysine--tRNA ligase of Acinetobacter baumannii (strain ATCC 17978 / DSM 105126 / CIP 53.77 / LMG 1025 / NCDC KC755 / 5377).